Consider the following 278-residue polypeptide: uncharacterized protein (278 aa).

NAD(+) is bound by residues 112-113 (HI), 191-193 (VGR), and Asp-217. The active site involves Arg-193. The active site involves Glu-222. His-241 serves as the catalytic Proton donor. 241 to 244 (HSAG) is a binding site for NAD(+).

The protein belongs to the D-isomer specific 2-hydroxyacid dehydrogenase family.

This is an uncharacterized protein from Streptomyces coelicolor.